The chain runs to 287 residues: Mu-like prophage FluMu DNA transposition protein B (287 aa).

The 56-residue stretch at 7-62 folds into the HTH cro/C1-type domain; it reads LKQHLSDSQITQAQLAREAGVNAGALSAYLNDNYKGNIADVEAKLAAYLEKKAVQA. The H-T-H motif DNA-binding region spans 18–37; it reads QAQLAREAGVNAGALSAYLN. Residue 98–105 participates in ATP binding; it reads GMSGVGKT.

In terms of biological role, this protein is a non-specific DNA-binding and ATP-hydrolyzing protein essential for bacteriophage integration and replication. In Haemophilus influenzae (strain ATCC 51907 / DSM 11121 / KW20 / Rd), this protein is Mu-like prophage FluMu DNA transposition protein B.